A 1003-amino-acid chain; its full sequence is Translation initiation factor IF-2 (1003 aa).

Residues 36 to 392 are disordered; it reads SSTIEPPVVK…RQKRNEYESM (357 aa). The segment covering 62 to 151 has biased composition (low complexity); sequence AAKPAAAKPA…PKPAAAAKPA (90 aa). 2 stretches are compositionally biased toward pro residues: residues 178-190 and 213-230; these read DGMP…PAPK and PRPG…PGGG. Composition is skewed to gly residues over residues 231 to 243 and 255 to 271; these read PRPQ…GGQR and GNRG…GPRP. Residues 273 to 286 show a composition bias toward low complexity; the sequence is GGPRPQGGSRPQGG. Residues 329-372 show a composition bias toward gly residues; that stretch reads GKGGRGGQAGGGAGGGFNRGGGTGGGAGRGGRRGGTAGAFGRPG. Residues 376-385 show a composition bias toward basic residues; sequence RRGRKSKRQK. The 173-residue stretch at 498–670 folds into the tr-type G domain; that stretch reads KRPPVVTVMG…VCLTADAELD (173 aa). Residues 507 to 514 form a G1 region; the sequence is GHVDHGKT. GTP is bound at residue 507–514; the sequence is GHVDHGKT. Residues 532-536 form a G2 region; it reads GITQG. The G3 stretch occupies residues 557-560; sequence DTPG. Residues 557–561 and 611–614 contribute to the GTP site; these read DTPGH and NKID. The interval 611 to 614 is G4; the sequence is NKID. The interval 647 to 649 is G5; the sequence is SAK.

It belongs to the TRAFAC class translation factor GTPase superfamily. Classic translation factor GTPase family. IF-2 subfamily.

Its subcellular location is the cytoplasm. Functionally, one of the essential components for the initiation of protein synthesis. Protects formylmethionyl-tRNA from spontaneous hydrolysis and promotes its binding to the 30S ribosomal subunits. Also involved in the hydrolysis of GTP during the formation of the 70S ribosomal complex. The polypeptide is Translation initiation factor IF-2 (Corynebacterium glutamicum (strain R)).